A 510-amino-acid chain; its full sequence is GMP synthase [glutamine-hydrolyzing] (510 aa).

The Glutamine amidotransferase type-1 domain maps to 5-194; that stretch reads DILVLDFGSQ…FAKICGCEST (190 aa). C82 acts as the Nucleophile in catalysis. Catalysis depends on residues H169 and E171. The GMPS ATP-PPase domain occupies 195–385; sequence WNMGSFAKKE…LGLSRDIVYR (191 aa). ATP is bound at residue 222 to 228; the sequence is SGGVDSS.

Homodimer.

It carries out the reaction XMP + L-glutamine + ATP + H2O = GMP + L-glutamate + AMP + diphosphate + 2 H(+). It functions in the pathway purine metabolism; GMP biosynthesis; GMP from XMP (L-Gln route): step 1/1. Its function is as follows. Catalyzes the synthesis of GMP from XMP. The chain is GMP synthase [glutamine-hydrolyzing] from Campylobacter fetus subsp. fetus (strain 82-40).